We begin with the raw amino-acid sequence, 258 residues long: Na(+)-translocating NADH-quinone reductase subunit C (258 aa).

A helical transmembrane segment spans residues 14–34 (LIVVLAVSLICSVIVAGAVVG). At Ser226 the chain carries FMN phosphoryl serine.

This sequence belongs to the NqrC family. As to quaternary structure, composed of six subunits; NqrA, NqrB, NqrC, NqrD, NqrE and NqrF. FMN serves as cofactor.

It localises to the cell inner membrane. The catalysed reaction is a ubiquinone + n Na(+)(in) + NADH + H(+) = a ubiquinol + n Na(+)(out) + NAD(+). Functionally, NQR complex catalyzes the reduction of ubiquinone-1 to ubiquinol by two successive reactions, coupled with the transport of Na(+) ions from the cytoplasm to the periplasm. NqrA to NqrE are probably involved in the second step, the conversion of ubisemiquinone to ubiquinol. The polypeptide is Na(+)-translocating NADH-quinone reductase subunit C (Neisseria meningitidis serogroup A / serotype 4A (strain DSM 15465 / Z2491)).